Reading from the N-terminus, the 254-residue chain is Urease accessory protein UreF (254 aa).

Basic and acidic residues predominate over residues 1–11 (MDKGKSVKSTE). Positions 1–26 (MDKGKSVKSTEKSVGMPPKTPKTDNN) are disordered.

It belongs to the UreF family. UreH, UreF and UreG form a complex that acts as a GTP-hydrolysis-dependent molecular chaperone, activating the urease apoprotein by helping to assemble the nickel containing metallocenter of UreC. The UreE protein probably delivers the nickel.

The protein localises to the cytoplasm. Required for maturation of urease via the functional incorporation of the urease nickel metallocenter. The protein is Urease accessory protein UreF of Helicobacter pylori (strain ATCC 700392 / 26695) (Campylobacter pylori).